Here is a 486-residue protein sequence, read N- to C-terminus: Cytochrome P450 monooxygenase aclC (486 aa).

Residue Cys-427 coordinates heme.

The protein belongs to the cytochrome P450 family. Requires heme as cofactor.

It participates in mycotoxin biosynthesis. Cytochrome P450 monooxygenase; part of the gene cluster that mediates the biosynthesis of aspirochlorine (or antibiotic A30641), an unusual halogenated spiro compound with distinctive antifungal properties due to selective inhibition of protein biosynthesis, and which is also active against bacteria, viruses, and murine tumor cells. The non-ribosomal peptide synthetase (NRPS) aclP is responsible the formation of the diketopiperazine (DKP) core from the condensation of 2 phenylalanine residues. One Phe residue is tailored into chlorotyrosine by hydroxylation and chlorination, whereas the second Phe undergoes an unprecedented C-C bond cleavage to be converted into glycine. After formation of the DKP, sulfur is incorporated into the DKP by conjugation with glutathione by aclG, followed by its stepwise degradation to the thiol by aclI, aclJ and aclK, and the dithiol oxidation by aclT. In addition, oxygenases (aclB, aclC, aclL and aclO) and O-methyltransferases (aclM and aclU) act as tailoring enzymes to produce the intermediate dechloroaspirochlorine. Ultimately, chlorination of dechloroaspirochlorine by the halogenase aclH is the last step in the aspirochlorine pathway. The polypeptide is Cytochrome P450 monooxygenase aclC (Aspergillus oryzae (strain ATCC 42149 / RIB 40) (Yellow koji mold)).